Here is a 359-residue protein sequence, read N- to C-terminus: Hereditary hemochromatosis protein homolog (359 aa).

The signal sequence occupies residues 1–24 (MSLSAGLPVRPLLLLLLLLWSVAP). An alpha-1 region spans residues 25–126 (QALPPRSHSL…KVTKLGVVSE (102 aa)). The Extracellular segment spans residues 25–318 (QALPPRSHSL…WEPLQSQAMI (294 aa)). Residues Asn114, Asn142, Asn166, and Asn246 are each glycosylated (N-linked (GlcNAc...) asparagine). The segment at 127-217 (SHILQVVLGC…ELGRGVLGQQ (91 aa)) is alpha-2. Cystine bridges form between Cys136-Cys199 and Cys237-Cys294. The alpha-3 stretch occupies residues 218–309 (VPTLVKVTRH…GLDQPLTASW (92 aa)). The 90-residue stretch at 219–308 (PTLVKVTRHW…PGLDQPLTAS (90 aa)) folds into the Ig-like C1-type domain. A connecting peptide region spans residues 310 to 318 (EPLQSQAMI). Residues 319–339 (IGIISGVTVCAIFLVGILFLI) form a helical membrane-spanning segment. At 340 to 359 (LRKRKASGGTMGGYVLTDCE) the chain is on the cytoplasmic side.

The protein belongs to the MHC class I family. Binds TFR through the extracellular domain in a pH-dependent manner.

The protein resides in the cell membrane. Functionally, binds to transferrin receptor (TFR) and reduces its affinity for iron-loaded transferrin. The polypeptide is Hereditary hemochromatosis protein homolog (Hfe) (Mus musculus (Mouse)).